We begin with the raw amino-acid sequence, 477 residues long: Small ribosomal subunit protein uS5m (477 aa).

Belongs to the universal ribosomal protein uS5 family. In terms of assembly, component of the mitochondrial small ribosomal subunit (mt-SSU). Mature N.crassa 74S mitochondrial ribosomes consist of a small (37S) and a large (54S) subunit. The 37S small subunit contains a 16S ribosomal RNA (16S mt-rRNA) and 32 different proteins. The 54S large subunit contains a 23S rRNA (23S mt-rRNA) and 42 different proteins. uS3m, uS4m and uS5m form the narrow entry site of the mRNA channel.

It is found in the mitochondrion. Its function is as follows. Component of the mitochondrial ribosome (mitoribosome), a dedicated translation machinery responsible for the synthesis of mitochondrial genome-encoded proteins, including at least some of the essential transmembrane subunits of the mitochondrial respiratory chain. The mitoribosomes are attached to the mitochondrial inner membrane and translation products are cotranslationally integrated into the membrane. In Neurospora crassa (strain ATCC 24698 / 74-OR23-1A / CBS 708.71 / DSM 1257 / FGSC 987), this protein is Small ribosomal subunit protein uS5m (mrps5).